A 1056-amino-acid polypeptide reads, in one-letter code: PAX-interacting protein 1 (1056 aa).

BRCT domains follow at residues 8–93 (VPEE…GFSP) and 94–183 (ESCQ…FYHP). The interaction with PAGR1 stretch occupies residues 94–183 (ESCQIFFGLT…RRKDEAFYHP (90 aa)). Residues 188-205 (YEEEEEEEEEGDNEEQDS) show a composition bias toward acidic residues. Disordered regions lie at residues 188–276 (YEEE…QRRL), 393–412 (THVL…HPAL), and 419–486 (MQLQ…FQQQ). Over residues 214–223 (SSVASSAVAS) the composition is skewed to low complexity. Phosphoserine is present on residues serine 223 and serine 230. Low complexity-rich tracts occupy residues 396 to 412 (LQQH…HPAL), 419 to 435 (MQLQ…QQQP), and 445 to 486 (QFPQ…FQQQ). The segment at 577–1056 (QLFGHDPAVE…TLDYESYKFN (480 aa)) is interaction with TP53BP1. BRCT domains follow at residues 588–681 (PEES…RALH), 688–776 (PGGK…VQYS), 853–934 (TPLV…NYIL), and 955–989 (HVSP…GGKV). The short motif at 655-672 (RKRCVTAHWLNTVLKKKK) is the Nuclear localization signal element.

As to quaternary structure, interacts with the C-terminal transactivation domain of PAX2. Forms a constitutive complex with PAGR1 independently of the MLL2/MLL3 complex. Interacts with TP53BP1 (when phosphorylated at the N-terminus by ATM). Interacts with HLTF. Component of the KMT2 family MLL2/MLL3 complex (also named ASCOM complex), at least composed of the HMTs KMT2D and/or KMT2C, the common subunits ASH2L, RBBP5, WDR5 and DPY30, and the complex type-specific subunits PAXIP1/PTIP, PAGR1, NCOA6 and KDM6A; required for the association of PAGR1 with the MLL2/MLL3 complex. Interacts with NUPR1; this interaction prevents PAXIP1 inhibition of PAX2 transcription factor activity. As to expression, expression detected in all tissues examined, including brain stem, cerebellum, cortex, heart, spleen, kidney, liver, thymus and lung.

It is found in the nucleus matrix. Its subcellular location is the chromosome. In terms of biological role, involved in DNA damage response and in transcriptional regulation through histone methyltransferase (HMT) complexes such as the MLL2/MLL3 complex. Plays a role in early development. In DNA damage response is required for cell survival after ionizing radiation. In vitro shown to be involved in the homologous recombination mechanism for the repair of double-strand breaks (DSBs). Its localization to DNA damage foci requires Rnf8 and Ube2n. Recruits Tp53bp1 to DNA damage foci and, at least in particular repair processes, effective DNA damage response appears to require the association with Tp53bp1 phosphorylated by Atm. Together with Tp53bp1 regulates Atm association. Proposed to recruit Pagr1 to sites of DNA damage and the Pagr1:Paxip1 complex is required for cell survival in response to DNA damage independently of the MLL2/MLL3 complex. However, this function has been questioned. Promotes ubiquitination of PCNA following UV irradiation and may regulate recruitment of polymerase eta and Rad51 to chromatin after DNA damage. Proposed to be involved in transcriptional regulation by linking MLL-containing histone methyltransferase (HMT) complexes to gene promoters by interacting with promoter-bound transcription factors such as Pax2. Associates with gene promoters that are known to be regulated by Kmt2d/Mll2. During immunoglobulin class switching in activated B-cells is involved in trimethylation of histone H3 at 'Lys-4' and in transcription initiation of downstream switch regions at the immunoglobulin heavy-chain (Igh) locus; this function appears to involve the recruitment of MLL-containing HMT complexes. Conflictingly, its function in transcriptional regulation during immunoglobulin class switching is reported to be independent of the MLL2/MLL3 complex. This chain is PAX-interacting protein 1 (Paxip1), found in Mus musculus (Mouse).